Here is a 229-residue protein sequence, read N- to C-terminus: Leucyl/phenylalanyl-tRNA--protein transferase (229 aa).

It belongs to the L/F-transferase family.

It localises to the cytoplasm. It carries out the reaction N-terminal L-lysyl-[protein] + L-leucyl-tRNA(Leu) = N-terminal L-leucyl-L-lysyl-[protein] + tRNA(Leu) + H(+). The catalysed reaction is N-terminal L-arginyl-[protein] + L-leucyl-tRNA(Leu) = N-terminal L-leucyl-L-arginyl-[protein] + tRNA(Leu) + H(+). The enzyme catalyses L-phenylalanyl-tRNA(Phe) + an N-terminal L-alpha-aminoacyl-[protein] = an N-terminal L-phenylalanyl-L-alpha-aminoacyl-[protein] + tRNA(Phe). Functions in the N-end rule pathway of protein degradation where it conjugates Leu, Phe and, less efficiently, Met from aminoacyl-tRNAs to the N-termini of proteins containing an N-terminal arginine or lysine. This Pseudomonas syringae pv. syringae (strain B728a) protein is Leucyl/phenylalanyl-tRNA--protein transferase.